The chain runs to 425 residues: MREPDFLNHFLKKGYFKKHAKAVLALSGGLDSMFLFKVLSTYQKELEIELILAHVNHKQRIESDWEEKELRKLAAEAELPIYISNFSGEFSEARARNFRYDFFQEVMKKTGATALVTAHHADDQVETIFMRLIRGTRLRYLSGIKEKQVVGEIEIIRPFLHFQKKDFPSIFHFEDTSNQENHYFRNRIRNSYLPELEKENPRFRDAILGIGNEILDYDLAIAELSNNINVEDLQQLFSYSESTQRVLLQTYLNRFPDLNLTKAQFAEVQQILKSKSQYRHPIKNGYELIKEYQQFQICKISPQADEEEDELVLHYQNQVAYQGYLFSFGLPLEGESIQQIPVSRETSIHIRHRKTGDVLIQNGHRKKLRRLFIDLKIPMEKRNSALIIEQFGEIVSILGIATNNLSKKTKNDIMNTVLYIEKIDR.

27-32 (SGGLDS) contributes to the ATP binding site.

Belongs to the tRNA(Ile)-lysidine synthase family.

It is found in the cytoplasm. The enzyme catalyses cytidine(34) in tRNA(Ile2) + L-lysine + ATP = lysidine(34) in tRNA(Ile2) + AMP + diphosphate + H(+). In terms of biological role, ligates lysine onto the cytidine present at position 34 of the AUA codon-specific tRNA(Ile) that contains the anticodon CAU, in an ATP-dependent manner. Cytidine is converted to lysidine, thus changing the amino acid specificity of the tRNA from methionine to isoleucine. The chain is tRNA(Ile)-lysidine synthase from Streptococcus pneumoniae (strain 70585).